The sequence spans 472 residues: Eukaryotic translation initiation factor 2 subunit 3B (472 aa).

Alanine 2 bears the N-acetylalanine mark. A Phosphoserine modification is found at serine 16. The tr-type G domain maps to 39–248 (QATINIGTIG…IVKKIPVPPR (210 aa)). The interval 48–55 (GHVAHGKS) is G1. 51 to 56 (AHGKST) is a binding site for GTP. A G2 region spans residues 76 to 80 (NITIK). Residues 134 to 137 (DCPG) are G3. Residues 190 to 193 (NKID) and 225 to 227 (SAQ) each bind GTP. The interval 190–193 (NKID) is G4. The tract at residues 225–227 (SAQ) is G5.

This sequence belongs to the TRAFAC class translation factor GTPase superfamily. Classic translation factor GTPase family. EIF2G subfamily. In terms of assembly, eIF2 is a heterotrimer composed of an alpha, a beta and a gamma chain. eIF2 is member of the 43S pre-initiation complex (43S PIC). As to expression, specifically expressed in testis at the mRNA level.

It carries out the reaction GTP + H2O = GDP + phosphate + H(+). Functionally, member of the eIF2 complex that functions in the early steps of protein synthesis by forming a ternary complex with GTP and initiator tRNA. This complex binds to a 40S ribosomal subunit, followed by mRNA binding to form the 43S pre-initiation complex (43S PIC). Junction of the 60S ribosomal subunit to form the 80S initiation complex is preceded by hydrolysis of the GTP bound to eIF2 and release of an eIF2-GDP binary complex. In order for eIF2 to recycle and catalyze another round of initiation, the GDP bound to eIF2 must exchange with GTP by way of a reaction catalyzed by eIF-2B. The sequence is that of Eukaryotic translation initiation factor 2 subunit 3B from Homo sapiens (Human).